Reading from the N-terminus, the 348-residue chain is GTPase Obg 1 (348 aa).

The Obg domain occupies 1–159 (MSFVDEAKIH…HCVLLKLKIV (159 aa)). The region spanning 160–329 (SDVGIIGMPN…LHAQVKKAVV (170 aa)) is the OBG-type G domain. GTP contacts are provided by residues 166 to 173 (GMPNAGKS), 191 to 195 (FTTLE), 212 to 215 (DIPG), 279 to 282 (NKCD), and 310 to 312 (GDE). Residues Ser-173 and Thr-193 each contribute to the Mg(2+) site.

The protein belongs to the TRAFAC class OBG-HflX-like GTPase superfamily. OBG GTPase family. Monomer. It depends on Mg(2+) as a cofactor.

The protein resides in the cytoplasm. An essential GTPase which binds GTP, GDP and possibly (p)ppGpp with moderate affinity, with high nucleotide exchange rates and a fairly low GTP hydrolysis rate. Plays a role in control of the cell cycle, stress response, ribosome biogenesis and in those bacteria that undergo differentiation, in morphogenesis control. The polypeptide is GTPase Obg 1 (Anaplasma marginale (strain Florida)).